Consider the following 165-residue polypeptide: 3-isopropylmalate dehydratase small subunit (165 aa).

Belongs to the LeuD family. LeuD type 2 subfamily. In terms of assembly, heterodimer of LeuC and LeuD.

It carries out the reaction (2R,3S)-3-isopropylmalate = (2S)-2-isopropylmalate. Its pathway is amino-acid biosynthesis; L-leucine biosynthesis; L-leucine from 3-methyl-2-oxobutanoate: step 2/4. Functionally, catalyzes the isomerization between 2-isopropylmalate and 3-isopropylmalate, via the formation of 2-isopropylmaleate. In Saccharolobus islandicus (strain Y.N.15.51 / Yellowstone #2) (Sulfolobus islandicus), this protein is 3-isopropylmalate dehydratase small subunit.